We begin with the raw amino-acid sequence, 390 residues long: GTPase Obg/CgtA (390 aa).

One can recognise an Obg domain in the interval 1–159 (MKFVDEAVIK…RDIRLELLLL (159 aa)). An OBG-type G domain is found at 160-333 (ADVGMLGMPN…LCMKLAEFMD (174 aa)). Residues 166–173 (GMPNAGKS), 191–195 (FTTLV), 213–216 (DIPG), 283–286 (NKVD), and 314–316 (SAA) contribute to the GTP site. 2 residues coordinate Mg(2+): Ser-173 and Thr-193.

This sequence belongs to the TRAFAC class OBG-HflX-like GTPase superfamily. OBG GTPase family. In terms of assembly, monomer. Interacts with SpoT (AC Q9KNM2) in a yeast 2-hybrid assay. Mg(2+) serves as cofactor.

The protein localises to the cytoplasm. Depletion experiments lead to gene down regulation and a dramatic increase in ppGpp levels, like those seen in the stringent response. There is no change in cell morphology in depletion experiments, but cells are very sensitive to the DNA-damaging agent hydroxyurea and are very elongated. Overexpression reduces growth and leads to elongated cells. Overexpression of proteins with C-terminal deletions of 29 or 62 amino acids showed fewer elongated cells. Functionally, an essential GTPase which binds GTP, GDP and possibly (p)ppGpp with moderate affinity, with high nucleotide exchange rates and a fairly low GTP hydrolysis rate. It may play a role in control of the cell cycle, stress response, ribosome biogenesis and in those bacteria that undergo differentiation, in morphogenesis control. GTPase activity is stimulated by 50S ribosomal subunits. In Vibrio cholerae serotype O1 (strain ATCC 39315 / El Tor Inaba N16961), this protein is GTPase Obg/CgtA.